The chain runs to 562 residues: Ribonuclease Y (562 aa).

The helical transmembrane segment at 1–21 threads the bilayer; the sequence is MNMLYFVLALLVGLAGGFFVG. Residues 108–129 are disordered; that stretch reads AAQDAARERETLSADRQETRRE. The KH domain occupies 252 to 312; it reads SVSVVPIPND…VRREVARHVL (61 aa). The HD domain maps to 378–471; that stretch reads VLKHSVQVAH…VAAADAISAA (94 aa).

Belongs to the RNase Y family.

The protein resides in the cell membrane. Endoribonuclease that initiates mRNA decay. This is Ribonuclease Y from Deinococcus geothermalis (strain DSM 11300 / CIP 105573 / AG-3a).